Here is a 186-residue protein sequence, read N- to C-terminus: Elongation factor P (186 aa).

This sequence belongs to the elongation factor P family.

It is found in the cytoplasm. It functions in the pathway protein biosynthesis; polypeptide chain elongation. Functionally, involved in peptide bond synthesis. Stimulates efficient translation and peptide-bond synthesis on native or reconstituted 70S ribosomes in vitro. Probably functions indirectly by altering the affinity of the ribosome for aminoacyl-tRNA, thus increasing their reactivity as acceptors for peptidyl transferase. This Neisseria meningitidis serogroup A / serotype 4A (strain DSM 15465 / Z2491) protein is Elongation factor P.